Here is a 209-residue protein sequence, read N- to C-terminus: uncharacterized protein (209 aa).

A run of 3 helical transmembrane segments spans residues 26–48, 147–169, and 179–196; these read LRYFIPYPAELLLFAIPLVGLAV, AYLVYLPAFFFALLVYFLYPFLM, and IVAAVLGIAAFFAGVYLL.

The protein localises to the cell membrane. This is an uncharacterized protein from Archaeoglobus fulgidus (strain ATCC 49558 / DSM 4304 / JCM 9628 / NBRC 100126 / VC-16).